The sequence spans 596 residues: Elongation factor 4 (596 aa).

In terms of domain architecture, tr-type G spans 2–184; sequence KHIRNFSIIA…VIVEQIPPPE (183 aa). Residues 14–19 and 131–134 contribute to the GTP site; these read DHGKST and NKID.

It belongs to the TRAFAC class translation factor GTPase superfamily. Classic translation factor GTPase family. LepA subfamily.

The protein resides in the cell inner membrane. It catalyses the reaction GTP + H2O = GDP + phosphate + H(+). Its function is as follows. Required for accurate and efficient protein synthesis under certain stress conditions. May act as a fidelity factor of the translation reaction, by catalyzing a one-codon backward translocation of tRNAs on improperly translocated ribosomes. Back-translocation proceeds from a post-translocation (POST) complex to a pre-translocation (PRE) complex, thus giving elongation factor G a second chance to translocate the tRNAs correctly. Binds to ribosomes in a GTP-dependent manner. In Shewanella piezotolerans (strain WP3 / JCM 13877), this protein is Elongation factor 4.